We begin with the raw amino-acid sequence, 868 residues long: Leucine--tRNA ligase (868 aa).

Positions 42–52 (PYPSGKLHMGH) match the 'HIGH' region motif. Residues 627–631 (KMSKS) carry the 'KMSKS' region motif. K630 is a binding site for ATP.

This sequence belongs to the class-I aminoacyl-tRNA synthetase family.

It is found in the cytoplasm. The catalysed reaction is tRNA(Leu) + L-leucine + ATP = L-leucyl-tRNA(Leu) + AMP + diphosphate. In Pseudomonas putida (strain W619), this protein is Leucine--tRNA ligase.